Consider the following 188-residue polypeptide: Fructose-1-phosphate phosphatase YqaB (188 aa).

The Nucleophile role is filled by aspartate 11. Residues aspartate 11, aspartate 13, and aspartate 167 each coordinate Mg(2+). 11-13 lines the substrate pocket; it reads DMD.

This sequence belongs to the HAD-like hydrolase superfamily. CbbY/CbbZ/Gph/YieH family. It depends on Mg(2+) as a cofactor. Requires Mn(2+) as cofactor. The cofactor is Co(2+). Zn(2+) is required as a cofactor.

Its function is as follows. Catalyzes strongly the dephosphorylation of fructose-1-phosphate (Fru1P) and slightly the dephosphorylation of 6-phosphogluconate (6P-Glu). It has low beta-phosphoglucomutase activity. The sequence is that of Fructose-1-phosphate phosphatase YqaB (yqaB) from Escherichia coli (strain K12).